A 188-amino-acid chain; its full sequence is UPF0461 protein C5orf24 homolog (188 aa).

At Ser37 the chain carries Phosphoserine. A Glycyl lysine isopeptide (Lys-Gly) (interchain with G-Cter in SUMO2) cross-link involves residue Lys75. A disordered region spans residues 79–142 (KKKKNLNRSG…GYKVSPGRPP (64 aa)). Residues 80 to 92 (KKKNLNRSGKRGR) are compositionally biased toward basic residues. Polar residues predominate over residues 94–107 (SGTTKSAGYRTSTG). Residues Ser121 and Ser180 each carry the phosphoserine modification. Residue Lys184 forms a Glycyl lysine isopeptide (Lys-Gly) (interchain with G-Cter in SUMO2) linkage.

Belongs to the UPF0461 family.

This Bos taurus (Bovine) protein is UPF0461 protein C5orf24 homolog.